A 131-amino-acid polypeptide reads, in one-letter code: MRKTSLLNSNISSVISKMGHTDMLAIGDCGLPIPKETERIDLALIKGVPGFIETLKAILEELQVEEVLIAKETEKVSPELFIEIKEIIKDTKITFISHEELKKELKYCKAVVRTGEQTPYANIILKSGVVF.

Histidine 20 (proton donor) is an active-site residue. Substrate is bound by residues aspartate 28, histidine 98, and 120–122 (YAN).

This sequence belongs to the RbsD / FucU family. RbsD subfamily. Homodecamer.

The protein resides in the cytoplasm. The catalysed reaction is beta-D-ribopyranose = beta-D-ribofuranose. Its pathway is carbohydrate metabolism; D-ribose degradation; D-ribose 5-phosphate from beta-D-ribopyranose: step 1/2. Functionally, catalyzes the interconversion of beta-pyran and beta-furan forms of D-ribose. This Clostridium perfringens (strain 13 / Type A) protein is D-ribose pyranase.